The chain runs to 228 residues: MAKSKAYRAAAEKIDLTKAYTASEAVELARETGSSKFDSTVEVALKLGVDPRKADQMVRGTVILPHGTGKTARVIVFATGPAAEAAIAAGADEVGGDELIEKVAGGYTSFDSAVSTPELMGKVGRLGKVLGPRGLMPNPKTGTVTPDVARAVSDIKGGKIEFRVDKHANVHFVVGKASFSPEQLSENVGAALEEIVRLKPSSSKGRYVQKATVSTTFGPGIPVDVNSI.

It belongs to the universal ribosomal protein uL1 family. As to quaternary structure, part of the 50S ribosomal subunit.

In terms of biological role, binds directly to 23S rRNA. The L1 stalk is quite mobile in the ribosome, and is involved in E site tRNA release. Functionally, protein L1 is also a translational repressor protein, it controls the translation of the L11 operon by binding to its mRNA. In Clavibacter sepedonicus (Clavibacter michiganensis subsp. sepedonicus), this protein is Large ribosomal subunit protein uL1.